The chain runs to 330 residues: ADP-L-glycero-D-manno-heptose-6-epimerase (330 aa).

Residues 11 to 12 (FI), 32 to 33 (DN), lysine 39, lysine 54, 75 to 79 (EGACS), and asparagine 92 each bind NADP(+). Tyrosine 139 (proton acceptor) is an active-site residue. Lysine 143 lines the NADP(+) pocket. Asparagine 168 is a substrate binding site. Positions 169 and 177 each coordinate NADP(+). The Proton acceptor role is filled by lysine 177. Residues arginine 179, histidine 186, 200 to 203 (FGEY), arginine 213, and tyrosine 292 each bind substrate.

The protein belongs to the NAD(P)-dependent epimerase/dehydratase family. HldD subfamily. In terms of assembly, homopentamer. It depends on NADP(+) as a cofactor.

It carries out the reaction ADP-D-glycero-beta-D-manno-heptose = ADP-L-glycero-beta-D-manno-heptose. It functions in the pathway nucleotide-sugar biosynthesis; ADP-L-glycero-beta-D-manno-heptose biosynthesis; ADP-L-glycero-beta-D-manno-heptose from D-glycero-beta-D-manno-heptose 7-phosphate: step 4/4. In terms of biological role, catalyzes the interconversion between ADP-D-glycero-beta-D-manno-heptose and ADP-L-glycero-beta-D-manno-heptose via an epimerization at carbon 6 of the heptose. The chain is ADP-L-glycero-D-manno-heptose-6-epimerase from Burkholderia pseudomallei (strain K96243).